The sequence spans 450 residues: Glucose-6-phosphate isomerase (450 aa).

The active-site Proton donor is E290. Active-site residues include H311 and K425.

The protein belongs to the GPI family.

The protein resides in the cytoplasm. It catalyses the reaction alpha-D-glucose 6-phosphate = beta-D-fructose 6-phosphate. It functions in the pathway carbohydrate biosynthesis; gluconeogenesis. The protein operates within carbohydrate degradation; glycolysis; D-glyceraldehyde 3-phosphate and glycerone phosphate from D-glucose: step 2/4. Its function is as follows. Catalyzes the reversible isomerization of glucose-6-phosphate to fructose-6-phosphate. The protein is Glucose-6-phosphate isomerase of Leuconostoc mesenteroides subsp. mesenteroides (strain ATCC 8293 / DSM 20343 / BCRC 11652 / CCM 1803 / JCM 6124 / NCDO 523 / NBRC 100496 / NCIMB 8023 / NCTC 12954 / NRRL B-1118 / 37Y).